The primary structure comprises 176 residues: Adenine phosphoribosyltransferase (176 aa).

It belongs to the purine/pyrimidine phosphoribosyltransferase family. As to quaternary structure, homodimer.

The protein localises to the cytoplasm. It catalyses the reaction AMP + diphosphate = 5-phospho-alpha-D-ribose 1-diphosphate + adenine. It functions in the pathway purine metabolism; AMP biosynthesis via salvage pathway; AMP from adenine: step 1/1. Its function is as follows. Catalyzes a salvage reaction resulting in the formation of AMP, that is energically less costly than de novo synthesis. The polypeptide is Adenine phosphoribosyltransferase (Methylobacillus flagellatus (strain ATCC 51484 / DSM 6875 / VKM B-1610 / KT)).